The sequence spans 399 residues: Chalcone synthase 2 (399 aa).

The active site involves Cys-166.

The protein belongs to the thiolase-like superfamily. Chalcone/stilbene synthases family.

It catalyses the reaction (E)-4-coumaroyl-CoA + 3 malonyl-CoA + 3 H(+) = 2',4,4',6'-tetrahydroxychalcone + 3 CO2 + 4 CoA. It functions in the pathway secondary metabolite biosynthesis; flavonoid biosynthesis. The primary product of this enzyme is 4,2',4',6'-tetrahydroxychalcone (also termed naringenin-chalcone or chalcone) which can under specific conditions spontaneously isomerize into naringenin. Substrate preference is feruloyl-CoA = caffeoyl-CoA &gt;&gt; cinnamoyl-CoA. The chain is Chalcone synthase 2 (CHS2) from Hordeum vulgare (Barley).